A 295-amino-acid chain; its full sequence is Acetylglutamate kinase (295 aa).

Residues 66 to 67, Arg-88, and Asn-193 each bind substrate; that span reads GG.

Belongs to the acetylglutamate kinase family. ArgB subfamily.

The protein resides in the cytoplasm. The catalysed reaction is N-acetyl-L-glutamate + ATP = N-acetyl-L-glutamyl 5-phosphate + ADP. It participates in amino-acid biosynthesis; L-arginine biosynthesis; N(2)-acetyl-L-ornithine from L-glutamate: step 2/4. Its function is as follows. Catalyzes the ATP-dependent phosphorylation of N-acetyl-L-glutamate. The chain is Acetylglutamate kinase from Afipia carboxidovorans (strain ATCC 49405 / DSM 1227 / KCTC 32145 / OM5) (Oligotropha carboxidovorans).